Here is a 291-residue protein sequence, read N- to C-terminus: Tyrosine recombinase XerA (291 aa).

The region spanning 9 to 102 (PESGDLYNAF…AVRRFLKWIN (94 aa)) is the Core-binding (CB) domain. Residues 115–279 (KEVKALDEIQ…VLDDLRNEYL (165 aa)) enclose the Tyr recombinase domain. Residues R150, K175, H231, R234, and H257 contribute to the active site. Catalysis depends on Y266, which acts as the O-(3'-phospho-DNA)-tyrosine intermediate.

This sequence belongs to the 'phage' integrase family. XerA subfamily.

It is found in the cytoplasm. In terms of biological role, site-specific tyrosine recombinase, which acts by catalyzing the cutting and rejoining of the recombining DNA molecules. Probably involved in the resolution of chromosome dimers. Binds to the dif site. The chain is Tyrosine recombinase XerA from Saccharolobus solfataricus (strain ATCC 35092 / DSM 1617 / JCM 11322 / P2) (Sulfolobus solfataricus).